The sequence spans 700 residues: DNA topoisomerase 1 (700 aa).

The region spanning 3-114 is the Toprim domain; the sequence is KNLIIVESPA…TLPRIVFHEI (112 aa). Mg(2+) contacts are provided by Glu9 and Asp83. Positions 130–553 constitute a Topo IA-type catalytic domain; that stretch reads NMHSVNAQQT…EFYYPFMRKI (424 aa). Residues 164–169 form an interaction with DNA region; sequence SAGRVQ. Tyr298 (O-(5'-phospho-DNA)-tyrosine intermediate) is an active-site residue. 3 C4-type zinc fingers span residues 573–599, 629–656, and 669–692; these read CPDCGGELAIRKGRFGEFVACLNFPKC, CPSCQKGEIVERFSKRGKFYGCSAYPKC, and CEECGETLVIKELKKGTFLECLKC.

Belongs to the type IA topoisomerase family. Monomer. Mg(2+) is required as a cofactor.

It carries out the reaction ATP-independent breakage of single-stranded DNA, followed by passage and rejoining.. Its function is as follows. Releases the supercoiling and torsional tension of DNA, which is introduced during the DNA replication and transcription, by transiently cleaving and rejoining one strand of the DNA duplex. Introduces a single-strand break via transesterification at a target site in duplex DNA. The scissile phosphodiester is attacked by the catalytic tyrosine of the enzyme, resulting in the formation of a DNA-(5'-phosphotyrosyl)-enzyme intermediate and the expulsion of a 3'-OH DNA strand. The free DNA strand then undergoes passage around the unbroken strand, thus removing DNA supercoils. Finally, in the religation step, the DNA 3'-OH attacks the covalent intermediate to expel the active-site tyrosine and restore the DNA phosphodiester backbone. This chain is DNA topoisomerase 1, found in Campylobacter jejuni subsp. jejuni serotype O:2 (strain ATCC 700819 / NCTC 11168).